The chain runs to 636 residues: Basic helix-loop-helix ARNT-like protein 2 (636 aa).

Positions 25–62 are disordered; sequence VSSRVSPGTRPTAMGSFSSHMTEFPRKRKGSDSDPSQS. Positions 46–258 are interaction with PER2; sequence TEFPRKRKGS…SPREKLIDAK (213 aa). Residues 49 to 54 carry the Nuclear localization signal motif; it reads PRKRKG. The bHLH domain occupies 107-160; it reads AFREAHSQTEKRRRDKMNNLIEELSAMIPQCNPMARKLDKLTVLRMAVQHLRSL. The Nuclear export signal 1 signature appears at 177–187; it reads LQDNELRHLIL. A PAS 1 domain is found at 178-250; it reads QDNELRHLIL…EQLSSFDISP (73 aa). Residue Lys287 forms a Glycyl lysine isopeptide (Lys-Gly) (interchain with G-Cter in SUMO2 and SUMO3) linkage. Lys294 participates in a covalent cross-link: Glycyl lysine isopeptide (Lys-Gly) (interchain with G-Cter in SUMO2). The region spanning 357–427 is the PAS 2 domain; the sequence is VPQNSGEINV…DKHKAVLQSK (71 aa). Residues 392 to 400 carry the Nuclear export signal 2 motif; the sequence is LGYLPQELL. The 44-residue stretch at 432 to 475 folds into the PAC domain; that stretch reads TDSYKFRAKDGSFVTLKSQWFSFTNPWTKELEYIVSVNTLVLGH.

Component of the circadian core oscillator, which includes the CRY proteins, CLOCK, or NPAS2, BMAL1 or BMAL2, CSNK1D and/or CSNK1E, TIMELESS and the PER proteins. Interacts directly with CLOCK to form the BMAL2-CLOCK transactivator. Can form heterodimers or homodimers which interact directly with CLOCK to form the transcription activator. Interacts with NPAS2 and HIF1A. Interacts with PER2. In terms of tissue distribution, expressed in fetal brain. Highly expressed in brain and placenta. Lower levels in heart, liver, thymus, kidney and lung. Located to endothelial cells and neuronal cells of the suprachiasmatic nucleus (SCN). Also detected in endothelial cells of the heart, lung and kidney. In the brain, specifically expressed in the thalamus, hippocampus and amygdala.

Its subcellular location is the nucleus. In terms of biological role, transcriptional activator which forms a core component of the circadian clock. The circadian clock, an internal time-keeping system, regulates various physiological processes through the generation of approximately 24 hour circadian rhythms in gene expression, which are translated into rhythms in metabolism and behavior. It is derived from the Latin roots 'circa' (about) and 'diem' (day) and acts as an important regulator of a wide array of physiological functions including metabolism, sleep, body temperature, blood pressure, endocrine, immune, cardiovascular, and renal function. Consists of two major components: the central clock, residing in the suprachiasmatic nucleus (SCN) of the brain, and the peripheral clocks that are present in nearly every tissue and organ system. Both the central and peripheral clocks can be reset by environmental cues, also known as Zeitgebers (German for 'timegivers'). The predominant Zeitgeber for the central clock is light, which is sensed by retina and signals directly to the SCN. The central clock entrains the peripheral clocks through neuronal and hormonal signals, body temperature and feeding-related cues, aligning all clocks with the external light/dark cycle. Circadian rhythms allow an organism to achieve temporal homeostasis with its environment at the molecular level by regulating gene expression to create a peak of protein expression once every 24 hours to control when a particular physiological process is most active with respect to the solar day. Transcription and translation of core clock components (CLOCK, NPAS2, BMAL1, BMAL2, PER1, PER2, PER3, CRY1 and CRY2) plays a critical role in rhythm generation, whereas delays imposed by post-translational modifications (PTMs) are important for determining the period (tau) of the rhythms (tau refers to the period of a rhythm and is the length, in time, of one complete cycle). A diurnal rhythm is synchronized with the day/night cycle, while the ultradian and infradian rhythms have a period shorter and longer than 24 hours, respectively. Disruptions in the circadian rhythms contribute to the pathology of cardiovascular diseases, cancer, metabolic syndromes and aging. A transcription/translation feedback loop (TTFL) forms the core of the molecular circadian clock mechanism. Transcription factors, CLOCK or NPAS2 and BMAL1 or BMAL2, form the positive limb of the feedback loop, act in the form of a heterodimer and activate the transcription of core clock genes and clock-controlled genes (involved in key metabolic processes), harboring E-box elements (5'-CACGTG-3') within their promoters. The core clock genes: PER1/2/3 and CRY1/2 which are transcriptional repressors form the negative limb of the feedback loop and interact with the CLOCK|NPAS2-BMAL1|BMAL2 heterodimer inhibiting its activity and thereby negatively regulating their own expression. This heterodimer also activates nuclear receptors NR1D1/2 and RORA/B/G, which form a second feedback loop and which activate and repress BMAL1 transcription, respectively. The CLOCK-BMAL2 heterodimer activates the transcription of SERPINE1/PAI1 and BHLHE40/DEC1. This Homo sapiens (Human) protein is Basic helix-loop-helix ARNT-like protein 2.